Consider the following 638-residue polypeptide: Phosphomethylpyrimidine synthase (638 aa).

Substrate contacts are provided by residues N243, M272, Y301, H337, 357-359 (SRG), 398-401 (DGLR), and E437. H441 contributes to the Zn(2+) binding site. Residue Y464 coordinates substrate. H505 lines the Zn(2+) pocket. C585, C588, and C593 together coordinate [4Fe-4S] cluster.

Belongs to the ThiC family. Homodimer. The cofactor is [4Fe-4S] cluster.

It carries out the reaction 5-amino-1-(5-phospho-beta-D-ribosyl)imidazole + S-adenosyl-L-methionine = 4-amino-2-methyl-5-(phosphooxymethyl)pyrimidine + CO + 5'-deoxyadenosine + formate + L-methionine + 3 H(+). The protein operates within cofactor biosynthesis; thiamine diphosphate biosynthesis. Catalyzes the synthesis of the hydroxymethylpyrimidine phosphate (HMP-P) moiety of thiamine from aminoimidazole ribotide (AIR) in a radical S-adenosyl-L-methionine (SAM)-dependent reaction. The chain is Phosphomethylpyrimidine synthase from Azoarcus sp. (strain BH72).